Here is a 316-residue protein sequence, read N- to C-terminus: N-acetylmuramic acid 6-phosphate etherase (316 aa).

The region spanning 66-229 is the SIS domain; sequence IVAAIGRGGR…STASMIRLGK (164 aa). The Proton donor role is filled by Glu94. The active site involves Glu125.

This sequence belongs to the GCKR-like family. MurNAc-6-P etherase subfamily. As to quaternary structure, homodimer.

It catalyses the reaction N-acetyl-D-muramate 6-phosphate + H2O = N-acetyl-D-glucosamine 6-phosphate + (R)-lactate. Its pathway is amino-sugar metabolism; 1,6-anhydro-N-acetylmuramate degradation. The protein operates within amino-sugar metabolism; N-acetylmuramate degradation. It participates in cell wall biogenesis; peptidoglycan recycling. Specifically catalyzes the cleavage of the D-lactyl ether substituent of MurNAc 6-phosphate, producing GlcNAc 6-phosphate and D-lactate. Together with AnmK, is also required for the utilization of anhydro-N-acetylmuramic acid (anhMurNAc) either imported from the medium or derived from its own cell wall murein, and thus plays a role in cell wall recycling. In Jannaschia sp. (strain CCS1), this protein is N-acetylmuramic acid 6-phosphate etherase.